The chain runs to 104 residues: Met repressor (104 aa).

It belongs to the MetJ family. Homodimer.

Its subcellular location is the cytoplasm. Its function is as follows. This regulatory protein, when combined with SAM (S-adenosylmethionine) represses the expression of the methionine regulon and of enzymes involved in SAM synthesis. The protein is Met repressor of Shewanella oneidensis (strain ATCC 700550 / JCM 31522 / CIP 106686 / LMG 19005 / NCIMB 14063 / MR-1).